A 145-amino-acid chain; its full sequence is Large ribosomal subunit protein uL11 (145 aa).

This sequence belongs to the universal ribosomal protein uL11 family. In terms of assembly, part of the ribosomal stalk of the 50S ribosomal subunit. Interacts with L10 and the large rRNA to form the base of the stalk. L10 forms an elongated spine to which L12 dimers bind in a sequential fashion forming a multimeric L10(L12)X complex. Post-translationally, one or more lysine residues are methylated.

In terms of biological role, forms part of the ribosomal stalk which helps the ribosome interact with GTP-bound translation factors. The sequence is that of Large ribosomal subunit protein uL11 from Rickettsia akari (strain Hartford).